We begin with the raw amino-acid sequence, 348 residues long: DnaJ homolog subfamily B member 5 (348 aa).

The region spanning 4–68 (DYYKILGIPS…KKRGLYDQYG (65 aa)) is the J domain.

This is DnaJ homolog subfamily B member 5 (DNAJB5) from Homo sapiens (Human).